The sequence spans 1157 residues: uncharacterized protein (1157 aa).

Positions 1 to 10 are enriched in basic and acidic residues; the sequence is MDPHWKRHDS. Disordered stretches follow at residues 1–35, 159–233, and 478–498; these read MDPH…QRFG, QTTP…SVEP, and KNQS…GKGP. 2 stretches are compositionally biased toward low complexity: residues 18 to 31 and 181 to 197; these read SPSA…PSSA and SAGT…NPNF. A compositionally biased stretch (polar residues) spans 208–228; the sequence is QEWQQSPLESPLSMHSLQESL. The CSD2 domain maps to 501-574; that stretch reads VWFKPSDKRI…KVEYKAILHD (74 aa). One can recognise an RNB domain in the interval 608–921; that stretch reads LRDKLTFMIG…ICVQRQLREA (314 aa). Positions 973-1030 constitute a DIS3L2 C-terminal domain; it reads GLVKHKAFVLAVDQEYIDIVIYEFGLERRISLDLLPLSNCDFNEQKHELYLSWRTNAS. Positions 1084 to 1113 are disordered; the sequence is YSKARGNDSTSKTAKSSSGNQDISGDGKLH. Polar residues predominate over residues 1090 to 1106; the sequence is NDSTSKTAKSSSGNQDI.

Belongs to the RNR ribonuclease family.

The protein resides in the cytoplasm. This is an uncharacterized protein from Schizosaccharomyces pombe (strain 972 / ATCC 24843) (Fission yeast).